A 291-amino-acid polypeptide reads, in one-letter code: Endo-1,4-beta-xylanase 11B (291 aa).

The first 19 residues, 1–19, serve as a signal peptide directing secretion; it reads MVAFSSLFLGASIAATALA. A GH11 domain is found at 34–222; the sequence is TYTQSATGTH…SSGSARINVG (189 aa). A glycan (N-linked (GlcNAc...) asparagine) is linked at Asn93. The active-site Nucleophile is the Glu118. Glu209 serves as the catalytic Proton donor. A disordered region spans residues 223–246; that stretch reads GGSTGGGNNGGGNNGGNPGGNPGG. A CBM1 domain is found at 255–291; it reads NCSPRWGQCGGQGWNGPTCCESGTTCRQQNQWYSQCL.

This sequence belongs to the glycosyl hydrolase 11 (cellulase G) family.

The protein resides in the secreted. It carries out the reaction Endohydrolysis of (1-&gt;4)-beta-D-xylosidic linkages in xylans.. It participates in glycan degradation; xylan degradation. The activity iss completely inhibited by Hg(2+), a metal ion that interacts with Trp and oxidizes the indole ring, and is significantly enhanced by beta-mercaptoethanol, which counteracts the oxidation effects of the S-S linkage between Cys residues. In terms of biological role, endo-1,4-beta-xylanase involved in the hydrolysis of xylan, a major structural heterogeneous polysaccharide found in plant biomass representing the second most abundant polysaccharide in the biosphere, after cellulose. Shows maximum activity on soluble wheat arabinoxylan (defined as 100%), moderate activity on birchwood xylan (80.5%) and beechwood xylan (76.2%), and weak activity on insoluble wheat arabinoxylan (7.0%). Has no activity towards glucan or carboxymethyl cellulose-sodium (CMC-Na). This is Endo-1,4-beta-xylanase 11B from Humicola insolens (Soft-rot fungus).